A 242-amino-acid chain; its full sequence is Floral homeotic protein AGAMOUS (242 aa).

In terms of domain architecture, MADS-box spans 19–73; that stretch reads RGKIEIKRIENTTNRQVTFCKRRNGLLKKAYELSVLCDAEVALIVFSSRGRLYEY. In terms of domain architecture, K-box spans 103–193; sequence AQYYQQEASK…RAKIAETERS (91 aa).

In terms of tissue distribution, expressed exclusively in stamens and carpels.

It is found in the nucleus. Functionally, probable transcription factor involved in regulating genes that determines stamen and carpel development in wild-type flowers. This is Floral homeotic protein AGAMOUS (AG1) from Petunia hybrida (Petunia).